Here is a 333-residue protein sequence, read N- to C-terminus: 4-hydroxy-2-oxovalerate aldolase (333 aa).

A Pyruvate carboxyltransferase domain is found at 3 to 253; that stretch reads ILINDSTLRD…NTGIDLYHFL (251 aa). Substrate is bound at residue 11–12; that stretch reads RD. Residue aspartate 12 coordinates Mn(2+). The Proton acceptor role is filled by histidine 15. Positions 165 and 192 each coordinate substrate. 2 residues coordinate Mn(2+): histidine 192 and histidine 194.

Belongs to the 4-hydroxy-2-oxovalerate aldolase family. As to quaternary structure, interacts with MhpF.

The enzyme catalyses (S)-4-hydroxy-2-oxopentanoate = acetaldehyde + pyruvate. The protein operates within aromatic compound metabolism; 3-phenylpropanoate degradation. In terms of biological role, catalyzes the retro-aldol cleavage of 4-hydroxy-2-oxopentanoate to pyruvate and acetaldehyde. Is involved in the meta-cleavage pathway for the degradation of aromatic compounds. This chain is 4-hydroxy-2-oxovalerate aldolase, found in Serratia proteamaculans (strain 568).